The chain runs to 163 residues: Bacterial microcompartment assembly protein PduM (163 aa).

The protein belongs to the PduM family. In terms of assembly, interacts with shell protein PduK.

It localises to the bacterial microcompartment. The protein operates within polyol metabolism; 1,2-propanediol degradation. Plays an essential role in assembly and/or stability of the bacterial microcompartment (BMC) dedicated to 1,2-propanediol (1,2-PD) degradation. Functionally, expression of a cosmid containing the full 21-gene pdu operon in E.coli allows E.coli to grow on 1,2-propanediol (1,2-PD) with the appearance of bacterial microcompartments (BMC) in its cytoplasm. In terms of biological role, the 1,2-PD-specific bacterial microcompartment (BMC) concentrates low levels of 1,2-PD catabolic enzymes, concentrates volatile reaction intermediates thus enhancing pathway flux and keeps the level of toxic, mutagenic propionaldehyde low. This chain is Bacterial microcompartment assembly protein PduM, found in Citrobacter freundii.